The following is a 684-amino-acid chain: Poly(A) RNA polymerase cid14 (684 aa).

Disordered stretches follow at residues 1-52 (MGKK…DAYD), 64-127 (DQEE…KRGE), and 161-219 (WNSD…QAYE). Composition is skewed to basic and acidic residues over residues 19-35 (ERTEPLPRRIFKNDKPS), 73-91 (GSKKSRNDNDSEGIRDKGG), 108-127 (DPLEPLEKPDLPEEAIKRGE), 171-186 (SNDKSKNNESLKKSSK), and 199-210 (FFHEANEKSDSN). D298 and D300 together coordinate Mg(2+). Residues G364, K389, S407, Y408, N492, and K496 each coordinate ATP. The region spanning 434–492 (NFGVLLLEFLELYGKQFYYDAVGIAVHNGGFYFSKKKMGWLKPNQPYLLSIQDPVDFQN) is the PAP-associated domain. Positions 623-684 (GHENFQKQAL…SRAKKIRKRF (62 aa)) are disordered. Positions 628–655 (QKQALTSTGEQSSSNSRANPSKLFNISS) are enriched in polar residues. The segment covering 656–672 (DDSEDEVPIIEDTTASD) has biased composition (acidic residues).

It belongs to the DNA polymerase type-B-like family. In terms of assembly, heterooligomer. Component of the TRAMP complex composed of at least cid14, mtr4, and air1. It depends on Mg(2+) as a cofactor. Mn(2+) serves as cofactor.

It is found in the nucleus. It localises to the nucleolus. It catalyses the reaction RNA(n) + ATP = RNA(n)-3'-adenine ribonucleotide + diphosphate. In terms of biological role, required for 3' polyadenylation of the 5.8S and 25S rRNAs as a prelude to their degradation in the exosome. Involved in the nucleolar organization to ensure faithful chromosome segregation during mitosis. In Schizosaccharomyces pombe (strain 972 / ATCC 24843) (Fission yeast), this protein is Poly(A) RNA polymerase cid14 (cid14).